Here is a 325-residue protein sequence, read N- to C-terminus: GPI-linked NAD(P)(+)--arginine ADP-ribosyltransferase 1 (325 aa).

An N-terminal signal peptide occupies residues 1-22; it reads MKIPAMMSLLLVSVGLRDGVQV. Disulfide bonds link Cys-53-Cys-272 and Cys-169-Cys-219. Residue Asn-65 is glycosylated (N-linked (GlcNAc...) asparagine). The 196-residue stretch at 73–268 folds into the TR mART core domain; the sequence is KVYADGWAQA…IYLRALGKRS (196 aa). Positions 117 and 174 each coordinate NAD(+). Catalysis depends on residues Arg-174 and Ser-197. Ser-228 provides a ligand contact to NAD(+). Glu-235 is an active-site residue. N-linked (GlcNAc...) asparagine glycosylation occurs at Asn-248. Ser-290 carries GPI-anchor amidated serine lipidation. Residues 291–325 constitute a propeptide, removed in mature form; it reads APGSISASCSLLLLLLFLVLSALPENPGLQQLTRC.

Belongs to the Arg-specific ADP-ribosyltransferase family. As to expression, abundantly expressed in cardiac and skeletal muscle. Low levels also found in lung.

The protein localises to the sarcoplasmic reticulum membrane. It catalyses the reaction L-arginyl-[protein] + NAD(+) = N(omega)-(ADP-D-ribosyl)-L-arginyl-[protein] + nicotinamide + H(+). In terms of biological role, has ADP-ribosyltransferase activity toward GLP1R. This is GPI-linked NAD(P)(+)--arginine ADP-ribosyltransferase 1 (Art1) from Mus musculus (Mouse).